The chain runs to 161 residues: ATP synthase subunit b 1 (161 aa).

The chain crosses the membrane as a helical span at residues 5 to 25 (AETWVAVAFVLMVALFIYFGA).

The protein belongs to the ATPase B chain family. F-type ATPases have 2 components, F(1) - the catalytic core - and F(0) - the membrane proton channel. F(1) has five subunits: alpha(3), beta(3), gamma(1), delta(1), epsilon(1). F(0) has three main subunits: a(1), b(2) and c(10-14). The alpha and beta chains form an alternating ring which encloses part of the gamma chain. F(1) is attached to F(0) by a central stalk formed by the gamma and epsilon chains, while a peripheral stalk is formed by the delta and b chains.

It localises to the cell inner membrane. Functionally, f(1)F(0) ATP synthase produces ATP from ADP in the presence of a proton or sodium gradient. F-type ATPases consist of two structural domains, F(1) containing the extramembraneous catalytic core and F(0) containing the membrane proton channel, linked together by a central stalk and a peripheral stalk. During catalysis, ATP synthesis in the catalytic domain of F(1) is coupled via a rotary mechanism of the central stalk subunits to proton translocation. Component of the F(0) channel, it forms part of the peripheral stalk, linking F(1) to F(0). This is ATP synthase subunit b 1 from Afipia carboxidovorans (strain ATCC 49405 / DSM 1227 / KCTC 32145 / OM5) (Oligotropha carboxidovorans).